The sequence spans 203 residues: GTP cyclohydrolase-2 (203 aa).

49–53 (RIHSE) contacts GTP. Zn(2+)-binding residues include cysteine 54, cysteine 65, and cysteine 67. GTP is bound by residues glutamine 70, 92–94 (EGR), and threonine 114. Aspartate 126 acts as the Proton acceptor in catalysis. Arginine 128 (nucleophile) is an active-site residue. Residues threonine 149 and lysine 154 each contribute to the GTP site.

Belongs to the GTP cyclohydrolase II family. Zn(2+) serves as cofactor.

The catalysed reaction is GTP + 4 H2O = 2,5-diamino-6-hydroxy-4-(5-phosphoribosylamino)-pyrimidine + formate + 2 phosphate + 3 H(+). It functions in the pathway cofactor biosynthesis; riboflavin biosynthesis; 5-amino-6-(D-ribitylamino)uracil from GTP: step 1/4. In terms of biological role, catalyzes the conversion of GTP to 2,5-diamino-6-ribosylamino-4(3H)-pyrimidinone 5'-phosphate (DARP), formate and pyrophosphate. This Shewanella sp. (strain W3-18-1) protein is GTP cyclohydrolase-2.